A 316-amino-acid chain; its full sequence is MEFATTSSRFSKEEEEEEEGEQEMEQEQDEEEEEAEASPREIPFMTSAAAAATASSSSPTSVSPSATASAAASTSASGSPFRSSDGAGASGSGGGGGGEDVEVIEKEHMFDKVVTPSDVGKLNRLVIPKQHAEKYFPLDSAANEKGLLLSFEDRTGKLWRFRYSYWNSSQSYVMTKGWSRFVKEKRLDAGDTVSFCRGAAEATRDRLFIDWKRRADVRDPHRFQRLPLPMTSPYGPWGGGAGASSCRPRRPPRSTSITAFARASTSATSTPLCRRGSSSSSAPQGRGFISTRPCHRRRRHLRLLTNSTLRCTTRAP.

The segment at 1-100 (MEFATTSSRF…GSGGGGGGED (100 aa)) is disordered. Acidic residues predominate over residues 13 to 36 (EEEEEEEGEQEMEQEQDEEEEEAE). Residues 46-77 (TSAAAAATASSSSPTSVSPSATASAAASTSAS) show a composition bias toward low complexity. Residues 88 to 98 (GASGSGGGGGG) show a composition bias toward gly residues. Residues 110–215 (FDKVVTPSDV…RLFIDWKRRA (106 aa)) constitute a DNA-binding region (TF-B3). Residues 239–290 (GGAGASSCRPRRPPRSTSITAFARASTSATSTPLCRRGSSSSSAPQGRGFIS) form a disordered region. Over residues 253 to 270 (RSTSITAFARASTSATST) the composition is skewed to low complexity.

The protein resides in the nucleus. This Oryza sativa subsp. japonica (Rice) protein is B3 domain-containing protein Os04g0581400.